Here is a 192-residue protein sequence, read N- to C-terminus: Thymidine kinase (192 aa).

Residues 9–16 (SAMNAGKS) and 87–90 (DECQ) each bind ATP. The active-site Proton acceptor is E88. 4 residues coordinate Zn(2+): C145, C147, C182, and H185.

The protein belongs to the thymidine kinase family. In terms of assembly, homotetramer.

The protein localises to the cytoplasm. The catalysed reaction is thymidine + ATP = dTMP + ADP + H(+). This Vibrio vulnificus (strain YJ016) protein is Thymidine kinase.